A 640-amino-acid chain; its full sequence is Chaperone protein DnaK (640 aa).

Thr199 carries the phosphothreonine; by autocatalysis modification. A disordered region spans residues 603–640 (YAAGETESSAAEPGEPQEKTVDAEVVDAEFEEVKDDKK). A compositionally biased stretch (acidic residues) spans 626-640 (EVVDAEFEEVKDDKK).

This sequence belongs to the heat shock protein 70 family.

In terms of biological role, acts as a chaperone. The polypeptide is Chaperone protein DnaK (Methylobacillus flagellatus (strain ATCC 51484 / DSM 6875 / VKM B-1610 / KT)).